Reading from the N-terminus, the 198-residue chain is FMN-dependent NADH:quinone oxidoreductase (198 aa).

FMN is bound by residues S10, 16 to 18 (SQS), 94 to 97 (MYNF), and 138 to 141 (TRGG).

Belongs to the azoreductase type 1 family. In terms of assembly, homodimer. The cofactor is FMN.

The enzyme catalyses 2 a quinone + NADH + H(+) = 2 a 1,4-benzosemiquinone + NAD(+). It carries out the reaction N,N-dimethyl-1,4-phenylenediamine + anthranilate + 2 NAD(+) = 2-(4-dimethylaminophenyl)diazenylbenzoate + 2 NADH + 2 H(+). Its function is as follows. Quinone reductase that provides resistance to thiol-specific stress caused by electrophilic quinones. Also exhibits azoreductase activity. Catalyzes the reductive cleavage of the azo bond in aromatic azo compounds to the corresponding amines. The protein is FMN-dependent NADH:quinone oxidoreductase of Shewanella baltica (strain OS195).